We begin with the raw amino-acid sequence, 179 residues long: Large ribosomal subunit protein uL5 (179 aa).

The protein belongs to the universal ribosomal protein uL5 family. As to quaternary structure, part of the 50S ribosomal subunit; part of the 5S rRNA/L5/L18/L25 subcomplex. Contacts the 5S rRNA and the P site tRNA. Forms a bridge to the 30S subunit in the 70S ribosome.

This is one of the proteins that bind and probably mediate the attachment of the 5S RNA into the large ribosomal subunit, where it forms part of the central protuberance. In the 70S ribosome it contacts protein S13 of the 30S subunit (bridge B1b), connecting the 2 subunits; this bridge is implicated in subunit movement. Contacts the P site tRNA; the 5S rRNA and some of its associated proteins might help stabilize positioning of ribosome-bound tRNAs. The protein is Large ribosomal subunit protein uL5 of Pseudomonas syringae pv. tomato (strain ATCC BAA-871 / DC3000).